The following is a 203-amino-acid chain: Outer-membrane lipoprotein carrier protein (203 aa).

The N-terminal stretch at 1-21 is a signal peptide; the sequence is MKKLAITCALLSGMVVSQVWA. The tract at residues 184–203 is disordered; sequence DASKFTFTPPKGVTVDDQRK.

This sequence belongs to the LolA family. As to quaternary structure, monomer.

It is found in the periplasm. Its function is as follows. Participates in the translocation of lipoproteins from the inner membrane to the outer membrane. Only forms a complex with a lipoprotein if the residue after the N-terminal Cys is not an aspartate (The Asp acts as a targeting signal to indicate that the lipoprotein should stay in the inner membrane). This chain is Outer-membrane lipoprotein carrier protein, found in Klebsiella pneumoniae (strain 342).